The following is an 81-amino-acid chain: MAHSVKIYDTCIGCTQCVRACPTDVLEMIPWEGCKAKQIASAPRTEDCVGCKRCESACPTDFLSVRVYLWHETTRSMGLAY.

4Fe-4S ferredoxin-type domains lie at 2–31 (AHSVKIYDTCIGCTQCVRACPTDVLEMIPW) and 39–68 (IASAPRTEDCVGCKRCESACPTDFLSVRVY). [4Fe-4S] cluster is bound by residues C11, C14, C17, C21, C48, C51, C54, and C58.

As to quaternary structure, the eukaryotic PSI reaction center is composed of at least 11 subunits. It depends on [4Fe-4S] cluster as a cofactor.

The protein resides in the plastid. Its subcellular location is the chloroplast thylakoid membrane. The catalysed reaction is reduced [plastocyanin] + hnu + oxidized [2Fe-2S]-[ferredoxin] = oxidized [plastocyanin] + reduced [2Fe-2S]-[ferredoxin]. In terms of biological role, apoprotein for the two 4Fe-4S centers FA and FB of photosystem I (PSI); essential for photochemical activity. FB is the terminal electron acceptor of PSI, donating electrons to ferredoxin. The C-terminus interacts with PsaA/B/D and helps assemble the protein into the PSI complex. Required for binding of PsaD and PsaE to PSI. PSI is a plastocyanin-ferredoxin oxidoreductase, converting photonic excitation into a charge separation, which transfers an electron from the donor P700 chlorophyll pair to the spectroscopically characterized acceptors A0, A1, FX, FA and FB in turn. The chain is Photosystem I iron-sulfur center from Cycas taitungensis (Prince sago).